The chain runs to 430 residues: tRNA(Ile)-lysidine synthase (430 aa).

24–29 (SGGLDS) is a binding site for ATP.

It belongs to the tRNA(Ile)-lysidine synthase family.

It localises to the cytoplasm. The catalysed reaction is cytidine(34) in tRNA(Ile2) + L-lysine + ATP = lysidine(34) in tRNA(Ile2) + AMP + diphosphate + H(+). Functionally, ligates lysine onto the cytidine present at position 34 of the AUA codon-specific tRNA(Ile) that contains the anticodon CAU, in an ATP-dependent manner. Cytidine is converted to lysidine, thus changing the amino acid specificity of the tRNA from methionine to isoleucine. The polypeptide is tRNA(Ile)-lysidine synthase (Haemophilus influenzae (strain 86-028NP)).